Reading from the N-terminus, the 72-residue chain is uncharacterized protein (72 aa).

It localises to the plastid. The protein resides in the chloroplast. This is an uncharacterized protein from Oenothera berteroana (Bertero's evening primrose).